The following is a 152-amino-acid chain: Cytochrome c-type biogenesis protein CcmE (152 aa).

The Cytoplasmic portion of the chain corresponds to 1-8; it reads MQARRKTR. A helical; Signal-anchor for type II membrane protein transmembrane segment spans residues 9-29; it reads LYIVLAVLAGLGLTVSLTLYA. The Periplasmic segment spans residues 30–152; the sequence is LSSNIDLFYT…MTPEKTGAQP (123 aa). The heme site is built by H130 and Y134. Residues 133-152 are disordered; that stretch reads NYTPPEVKNAMTPEKTGAQP.

It belongs to the CcmE/CycJ family.

It is found in the cell inner membrane. Heme chaperone required for the biogenesis of c-type cytochromes. Transiently binds heme delivered by CcmC and transfers the heme to apo-cytochromes in a process facilitated by CcmF and CcmH. The protein is Cytochrome c-type biogenesis protein CcmE of Klebsiella pneumoniae (strain 342).